The chain runs to 62 residues: Large ribosomal subunit protein uL30 (62 aa).

It belongs to the universal ribosomal protein uL30 family. Part of the 50S ribosomal subunit.

The protein is Large ribosomal subunit protein uL30 of Thioalkalivibrio sulfidiphilus (strain HL-EbGR7).